Reading from the N-terminus, the 163-residue chain is Protein-export protein SecB (163 aa).

This sequence belongs to the SecB family. In terms of assembly, homotetramer, a dimer of dimers. One homotetramer interacts with 1 SecA dimer.

Its subcellular location is the cytoplasm. Its function is as follows. One of the proteins required for the normal export of preproteins out of the cell cytoplasm. It is a molecular chaperone that binds to a subset of precursor proteins, maintaining them in a translocation-competent state. It also specifically binds to its receptor SecA. This is Protein-export protein SecB from Burkholderia ambifaria (strain MC40-6).